The chain runs to 257 residues: RLA class II histocompatibility antigen, DP beta chain (257 aa).

Positions 1–29 (MRPCRSLRTAALAVVLTVLLHPVALGRAT) are cleaved as a signal peptide. The beta-1 stretch occupies residues 30–120 (PGESEQNYLW…LFQGLPVLLQ (91 aa)). Over 30–224 (PGESEQNYLW…KAQSDSARSK (195 aa)) the chain is Extracellular. Disulfide bonds link C45/C105 and C143/C199. The N-linked (GlcNAc...) asparagine glycan is linked to N49. Positions 121-214 (TQPRVSVSPS…SLDSPITVEW (94 aa)) are beta-2. Positions 123–211 (PRVSVSPSKK…EHPSLDSPIT (89 aa)) constitute an Ig-like C1-type domain. The interval 215–224 (KAQSDSARSK) is connecting peptide. A helical transmembrane segment spans residues 225–245 (MLAGVGGLVLGLVSLAVGVFM). Residues 246 to 257 (HRRSKKAQQGCR) are Cytoplasmic-facing.

Belongs to the MHC class II family.

The protein resides in the membrane. The protein is RLA class II histocompatibility antigen, DP beta chain of Oryctolagus cuniculus (Rabbit).